The sequence spans 236 residues: Purine nucleoside phosphorylase DeoD-type 2 (236 aa).

His5 contacts a purine D-ribonucleoside. Residues Gly21, Arg25, Arg44, and 88–91 contribute to the phosphate site; that span reads RVGT. Residues 180 to 182 and 204 to 205 each bind a purine D-ribonucleoside; these read EME and SD. Asp205 functions as the Proton donor in the catalytic mechanism.

Belongs to the PNP/UDP phosphorylase family. In terms of assembly, homohexamer; trimer of homodimers.

It carries out the reaction a purine D-ribonucleoside + phosphate = a purine nucleobase + alpha-D-ribose 1-phosphate. The enzyme catalyses a purine 2'-deoxy-D-ribonucleoside + phosphate = a purine nucleobase + 2-deoxy-alpha-D-ribose 1-phosphate. Functionally, catalyzes the reversible phosphorolytic breakdown of the N-glycosidic bond in the beta-(deoxy)ribonucleoside molecules, with the formation of the corresponding free purine bases and pentose-1-phosphate. The polypeptide is Purine nucleoside phosphorylase DeoD-type 2 (Shewanella oneidensis (strain ATCC 700550 / JCM 31522 / CIP 106686 / LMG 19005 / NCIMB 14063 / MR-1)).